The primary structure comprises 186 residues: uncharacterized protein (186 aa).

This is an uncharacterized protein from Saccharomyces cerevisiae (strain ATCC 204508 / S288c) (Baker's yeast).